A 329-amino-acid polypeptide reads, in one-letter code: Ribosomal RNA small subunit methyltransferase C (329 aa).

Belongs to the methyltransferase superfamily. RsmC family. Monomer.

It is found in the cytoplasm. The enzyme catalyses guanosine(1207) in 16S rRNA + S-adenosyl-L-methionine = N(2)-methylguanosine(1207) in 16S rRNA + S-adenosyl-L-homocysteine + H(+). Specifically methylates the guanine in position 1207 of 16S rRNA in the 30S particle. The chain is Ribosomal RNA small subunit methyltransferase C from Actinobacillus pleuropneumoniae serotype 3 (strain JL03).